An 85-amino-acid polypeptide reads, in one-letter code: U4-theraphotoxin-Hhn1a (85 aa).

Residues M1–A22 form the signal peptide. Positions E23 to R48 are excised as a propeptide. 3 disulfides stabilise this stretch: C52–C66, C56–C77, and C71–C82.

Belongs to the neurotoxin 12 (Hwtx-2) family. 02 (Hwtx-2) subfamily. In terms of assembly, monomer. Expressed by the venom gland.

The protein localises to the secreted. Its function is as follows. Neurotoxin active on both insects and mammals. The chain is U4-theraphotoxin-Hhn1a from Cyriopagopus hainanus (Chinese bird spider).